The chain runs to 227 residues: Phosphoribosylformylglycinamidine synthase subunit PurQ (227 aa).

One can recognise a Glutamine amidotransferase type-1 domain in the interval 3–225; the sequence is FAVIVLPGSN…VKNWRETHVT (223 aa). The Nucleophile role is filled by Cys-86. Residues His-194 and Glu-196 contribute to the active site.

Part of the FGAM synthase complex composed of 1 PurL, 1 PurQ and 2 PurS subunits.

The protein localises to the cytoplasm. The enzyme catalyses N(2)-formyl-N(1)-(5-phospho-beta-D-ribosyl)glycinamide + L-glutamine + ATP + H2O = 2-formamido-N(1)-(5-O-phospho-beta-D-ribosyl)acetamidine + L-glutamate + ADP + phosphate + H(+). It catalyses the reaction L-glutamine + H2O = L-glutamate + NH4(+). Its pathway is purine metabolism; IMP biosynthesis via de novo pathway; 5-amino-1-(5-phospho-D-ribosyl)imidazole from N(2)-formyl-N(1)-(5-phospho-D-ribosyl)glycinamide: step 1/2. Its function is as follows. Part of the phosphoribosylformylglycinamidine synthase complex involved in the purines biosynthetic pathway. Catalyzes the ATP-dependent conversion of formylglycinamide ribonucleotide (FGAR) and glutamine to yield formylglycinamidine ribonucleotide (FGAM) and glutamate. The FGAM synthase complex is composed of three subunits. PurQ produces an ammonia molecule by converting glutamine to glutamate. PurL transfers the ammonia molecule to FGAR to form FGAM in an ATP-dependent manner. PurS interacts with PurQ and PurL and is thought to assist in the transfer of the ammonia molecule from PurQ to PurL. The polypeptide is Phosphoribosylformylglycinamidine synthase subunit PurQ (Bacillus subtilis (strain 168)).